Here is a 255-residue protein sequence, read N- to C-terminus: Homeobox protein Hox-D4 (255 aa).

Residues 31–128 (EQGADYYGGG…KQPPPGTALK (98 aa)) form a disordered region. The span at 94 to 109 (EPCPAPPAPPPAPLPG) shows a compositional bias: pro residues. Positions 133-138 (VYPWMK) match the Antp-type hexapeptide motif. The homeobox DNA-binding region spans 154–213 (PKRSRTAYTRQQVLELEKEFHFNRYLTRRRRIEIAHTLCLSERQIKIWFQNRRMKWKKDH). The interval 212 to 255 (DHKLPNTKGRSSSSSSSSSCSSSVAPSQHLQPMAKDHHTDLTTL) is disordered. The span at 222–234 (SSSSSSSSSCSSS) shows a compositional bias: low complexity. Over residues 245–255 (AKDHHTDLTTL) the composition is skewed to basic and acidic residues.

This sequence belongs to the Antp homeobox family. Deformed subfamily. Forms a DNA-binding heterodimer with transcription factor PBX1.

The protein localises to the nucleus. Functionally, sequence-specific transcription factor which is part of a developmental regulatory system that provides cells with specific positional identities on the anterior-posterior axis. In Gorilla gorilla gorilla (Western lowland gorilla), this protein is Homeobox protein Hox-D4 (HOXD4).